A 353-amino-acid polypeptide reads, in one-letter code: Putative transcription factor MTF1 (353 aa).

Composition is skewed to polar residues over residues 11 to 26 (VTRSNQQTAANTTSPA) and 36 to 58 (EPSNVSDLTSEPVESTQIKQQGN). 2 disordered regions span residues 11–96 (VTRS…ALPC) and 129–174 (FTTT…TTNP). Composition is skewed to low complexity over residues 59-95 (TEASQDIQQEQQQQQTHIHPQQPALSAQQTQQQPALP) and 133-145 (NSSPNPSSPSPSS). A compositionally biased stretch (basic residues) spans 148 to 164 (SHTRKNSKYTVRHHRTR). The span at 165–174 (QSSFNGTTNP) shows a compositional bias: polar residues.

Its subcellular location is the nucleus. In terms of biological role, may be involved in transcriptional activation. This is Putative transcription factor MTF1 (MTF1) from Mucor circinelloides f. lusitanicus (Mucor racemosus var. lusitanicus).